The chain runs to 261 residues: (3R)-3-hydroxyacyl-CoA dehydrogenase (261 aa).

Residues 15–23 (LVTGAGSGI) and 42–43 (DL) each bind NAD(+). At Ser60 the chain carries Phosphoserine. 74-76 (ADV) contacts NAD(+). Ser156 is a binding site for substrate. The residue at position 160 (Lys160) is an N6-succinyllysine. Tyr169 (proton acceptor) is an active-site residue. NAD(+) contacts are provided by residues 169–173 (YAASK) and 202–204 (IAT). Position 173 is an N6-succinyllysine (Lys173).

Belongs to the short-chain dehydrogenases/reductases (SDR) family. Heterotetramer with CBR4; contains two molecules of HSD17B8 and CBR4. In terms of tissue distribution, widely expressed, particularly abundant in prostate, placenta and kidney. Expressed at protein level in various tissues like brain, cerebellum, heart, lung, kidney, ovary, testis, adrenals and prostate.

It localises to the mitochondrion matrix. The enzyme catalyses a (3R)-3-hydroxyacyl-CoA + NAD(+) = a 3-oxoacyl-CoA + NADH + H(+). It carries out the reaction 17beta-estradiol + NAD(+) = estrone + NADH + H(+). It catalyses the reaction testosterone + NAD(+) = androst-4-ene-3,17-dione + NADH + H(+). The catalysed reaction is 17beta-hydroxy-5alpha-androstan-3-one + NAD(+) = 5alpha-androstan-3,17-dione + NADH + H(+). Its pathway is steroid biosynthesis; estrogen biosynthesis. The protein operates within lipid metabolism; fatty acid biosynthesis. It participates in lipid metabolism; mitochondrial fatty acid beta-oxidation. Functionally, required for the solubility and assembly of the heterotetramer 3-ketoacyl-[acyl carrier protein] (ACP) reductase functional complex (KAR or KAR1) that forms part of the mitochondrial fatty acid synthase (mtFAS). Alpha-subunit of the KAR complex that acts as a scaffold protein required for the stability of carbonyl reductase type-4 (CBR4, beta-subunit of the KAR complex) and for its 3-ketoacyl-ACP reductase activity, thereby participating in mitochondrial fatty acid biosynthesis. Catalyzes the NAD-dependent conversion of (3R)-3-hydroxyacyl-CoA into 3-ketoacyl-CoA (3-oxoacyl-CoA) with no chain length preference; this enzymatic activity is not needed for the KAR function. Prefers (3R)-3-hydroxyacyl-CoA over (3S)-3-hydroxyacyl-CoA and displays enzymatic activity only in the presence of NAD(+). Cooperates with enoyl-CoA hydratase 1 in mitochondria, together they constitute an alternative route to the auxiliary enzyme pathways for the breakdown of Z-PUFA (cis polyunsaturated fatty acid) enoyl-esters. NAD-dependent 17-beta-hydroxysteroid dehydrogenase with highest activity towards estradiol (17beta-estradiol or E2). Has very low activity towards testosterone and dihydrotestosterone (17beta-hydroxy-5alpha-androstan-3-one). Primarily an oxidative enzyme, it can switch to a reductive mode determined in the appropriate physiologic milieu and catalyze the reduction of estrone (E1) to form biologically active 17beta-estradiol. This chain is (3R)-3-hydroxyacyl-CoA dehydrogenase (HSD17B8), found in Homo sapiens (Human).